The following is a 360-amino-acid chain: tRNA N6-adenosine threonylcarbamoyltransferase (360 aa).

Fe cation contacts are provided by His-115 and His-119. Substrate contacts are provided by residues 137 to 141 (LVSGG), Asp-170, Gly-183, and Asn-283. Asp-311 contacts Fe cation.

Belongs to the KAE1 / TsaD family. Requires Fe(2+) as cofactor.

It localises to the cytoplasm. It carries out the reaction L-threonylcarbamoyladenylate + adenosine(37) in tRNA = N(6)-L-threonylcarbamoyladenosine(37) in tRNA + AMP + H(+). Its function is as follows. Required for the formation of a threonylcarbamoyl group on adenosine at position 37 (t(6)A37) in tRNAs that read codons beginning with adenine. Is involved in the transfer of the threonylcarbamoyl moiety of threonylcarbamoyl-AMP (TC-AMP) to the N6 group of A37, together with TsaE and TsaB. TsaD likely plays a direct catalytic role in this reaction. This chain is tRNA N6-adenosine threonylcarbamoyltransferase, found in Sinorhizobium medicae (strain WSM419) (Ensifer medicae).